The following is a 395-amino-acid chain: MGSCFSSRVKADIFHNGKSSDLYGLSLSSRKSSSTVAAAQKTEGEILSSTPVKSFTFNELKLATRNFRPDSVIGEGGFGCVFKGWLDESTLTPTKPGTGLVIAVKKLNQEGFQGHREWLTEINYLGQLSHPNLVKLIGYCLEDEHRLLVYEFMQKGSLENHLFRRGAYFKPLPWFLRVNVALDAAKGLAFLHSDPVKVIYRDIKASNILLDADYNAKLSDFGLARDGPMGDLSYVSTRVMGTYGYAAPEYMSSGHLNARSDVYSFGVLLLEILSGKRALDHNRPAKEENLVDWARPYLTSKRKVLLIVDNRLDTQYLPEEAVRMASVAVQCLSFEPKSRPTMDQVVRALQQLQDNLGKPSQTNPVKDTKKLGFKTGTTKSSEKRFTQKPFGRHLV.

A lipid anchor (N-myristoyl glycine) is attached at Gly2. The S-palmitoyl cysteine moiety is linked to residue Cys4. Position 26 is a phosphoserine (Ser26). Lys31 is covalently cross-linked (Glycyl lysine isopeptide (Lys-Gly) (interchain with G-Cter in ubiquitin)). A phosphoserine mark is found at Ser32, Ser33, and Ser34. Thr35 is modified (phosphothreonine). A Glycyl lysine isopeptide (Lys-Gly) (interchain with G-Cter in ubiquitin) cross-link involves residue Lys41. Thr42 carries the post-translational modification Phosphothreonine. The residue at position 48 (Ser48) is a Phosphoserine; by autocatalysis and BAK1. Residue Thr50 is modified to Phosphothreonine. Phosphoserine; by autocatalysis is present on Ser54. The residue at position 56 (Thr56) is a Phosphothreonine; by autocatalysis. At Thr64 the chain carries Phosphothreonine. The Protein kinase domain maps to 67–356 (FRPDSVIGEG…RALQQLQDNL (290 aa)). The residue at position 71 (Ser71) is a Phosphoserine; by autocatalysis and BAK1. Position 73-81 (73-81 (IGEGGFGCV)) interacts with ATP. At Ser89 the chain carries Phosphoserine; by EFR. Positions 89-90 (ST) match the Required for physical interaction with and phosphorylation of downstream signaling proteins (e.g. WRKY33, WRKY50, WRKY51 and WRKY57) to activate EFR-mediated immune signaling motif. Thr90 bears the Phosphothreonine; by EFR mark. Lys95 is covalently cross-linked (Glycyl lysine isopeptide (Lys-Gly) (interchain with G-Cter in ubiquitin)). Position 105 (Lys105) interacts with ATP. Thr120 carries the post-translational modification Phosphothreonine; by EFR. Residue Ser129 is modified to Phosphoserine; by autocatalysis. Position 129 is a phosphoserine; by EFR (Ser129). Tyr150 bears the Phosphotyrosine mark. Residue Tyr168 is modified to Phosphotyrosine; by autocatalysis. Glycyl lysine isopeptide (Lys-Gly) (interchain with G-Cter in ubiquitin) cross-links involve residues Lys170 and Lys186. Ser193 is modified (phosphoserine). Residue Asp202 is the Proton acceptor of the active site. Ser206 carries the post-translational modification Phosphoserine; by autocatalysis and BAK1. A Phosphotyrosine; by autocatalysis modification is found at Tyr214. Ser219 carries the post-translational modification Phosphoserine. Ser233 carries the post-translational modification Phosphoserine; by autocatalysis. O-UMP-serine; by Xanthomonas campestris effector XopAC/AvrAC; alternate is present on Ser236. Residue Ser236 is modified to Phosphoserine; by autocatalysis and BAK1; alternate. The residue at position 237 (Thr237) is an O-UMP-threonine; by Xanthomonas campestris effector XopAC/AvrAC; alternate. Thr237 carries the post-translational modification Phosphothreonine; by autocatalysis and BAK1; alternate. Position 242 is a phosphothreonine; by autocatalysis and BAK1 (Thr242). Tyr243 bears the Phosphotyrosine mark. Tyr250 is subject to Phosphotyrosine; by autocatalysis. Phosphoserine; by autocatalysis is present on residues Ser252 and Ser253. Lys286 is covalently cross-linked (Glycyl lysine isopeptide (Lys-Gly) (interchain with G-Cter in ubiquitin)). Thr314 bears the Phosphothreonine; by autocatalysis mark. A Glycyl lysine isopeptide (Lys-Gly) (interchain with G-Cter in ubiquitin) cross-link involves residue Lys337. Thr341 bears the Phosphothreonine mark. Polar residues predominate over residues 354 to 365 (DNLGKPSQTNPV). The tract at residues 354-395 (DNLGKPSQTNPVKDTKKLGFKTGTTKSSEKRFTQKPFGRHLV) is disordered. A Glycyl lysine isopeptide (Lys-Gly) (interchain with G-Cter in ubiquitin) cross-link involves residue Lys358. The residue at position 360 (Ser360) is a Phosphoserine; by autocatalysis and BAK1. Thr362 carries the phosphothreonine; by autocatalysis and BAK1 modification. Lys366 is covalently cross-linked (Glycyl lysine isopeptide (Lys-Gly) (interchain with G-Cter in ubiquitin)). Phosphothreonine; by autocatalysis and BAK1 is present on Thr368. Phosphothreonine is present on residues Thr375 and Thr377.

It belongs to the protein kinase superfamily. Ser/Thr protein kinase family. Interacts with FLS2. Activation of FLS2 by flagellin (flg22) induces the dissociation of the complex. Interacts with BAK1. Interacts with the Xanthomonas campestris effector XopAC/AvrAC. Interacts with CPK28. Interacts with PEPR1. Interacts with PP2C38. Interacts with BRI1. Interacts with RBOHD. Binds to EFR when not phosphorylated at Ser-89 and Thr-90, in the absence of pathogen elicitor; dissociates upon pathogen-associated molecular pattern (PAMP)-triggered activation by EFR-mediated phosphorylation. Interacts directly with and phosphorylates WRKY transcription factors in the nucleus involved in the jasmonic acid (JA) and salicylic acid (SA) regulation (e.g. WRKY33, WRKY50, WRKY51 and WRKY57) to modulate defense hormones during plant immunity. Binds to ATL44/RHA3A and ATL45/RHA3B. Binds to SIK1 to be phosphorylated and stabilized. Phosphorylated by SIK1 to be stabilized. Phosphorylated by FLS2 and BAK1. Autophosphorylated. Autophosphorylation is reduced in presence of the Xanthomonas campestris effector XopAC/AvrAC. Phosphorylated, especially by EFR at Ser-89 and Thr-90, in response to the microbe-associated molecular pattern (MAMP) flg22. Phosphorylation in response to flg22 is abolished in presence of the Xanthomonas campestris effector XopAC/AvrAC. Phosphorylated at Ser-233, Ser-236 and Thr-237 by PEPR1. Phosphorylated at Tyr-150, Tyr-243 and Tyr-250. Tyrosine phosphorylation is required for BIK1 function in plant innate immunity. In terms of processing, uridylylated at Ser-236 and Thr-237 by the Xanthomonas campestris effector XopAC/AvrAC. This conceals conserved phosphorylation sites in the activation loop, reducing BIK1 kinase activity and consequently inhibiting downstream signaling. Post-translationally, monoubiquitinated by ATL44/RHA3A and ATL45/RHA3B following phosphorylation upon the recognition of microbe-associated molecular patterns (MAMPs, e.g. flg22) by pattern recognition receptors (PRRs), then released from the FLS2/BAK1 complex and internalized dynamically into endocytic compartments followed by the activation of immune signaling.

Its subcellular location is the cell membrane. It is found in the endosome membrane. The protein resides in the nucleus. The enzyme catalyses L-seryl-[protein] + ATP = O-phospho-L-seryl-[protein] + ADP + H(+). It catalyses the reaction L-threonyl-[protein] + ATP = O-phospho-L-threonyl-[protein] + ADP + H(+). With respect to regulation, kinase activation is repressed by the phosphatase PP2C38. Functionally, plays a central role in immune responses. Required to activate the resistance responses to necrotrophic pathogens, including the regulation of defense hormone expression (e.g. jasmonic acid (JA) and salicylic acid (SA)). Phosphorylates FLS2 and BAK1. Involved in pathogen-associated molecular pattern (PAMP)-triggered immunity (PTI) signaling, including calcium signaling, and defense responses downstream of FLS2; upon PAMP recognition, first phosphorylated by FLS2 and SIK1 prior to being monoubiquitinated by ATL44/RHA3A and ATL45/RHA3B at the plasma membrane, then internalized dynamically into endocytic compartments together with FLS2. Acts additively with PBL1 in PTI defenses. Acts as a positive regulator of the PAMP flg22-induced increase of cytosolic calcium. Upon flg22 perception, phosphorylates and activates the calcium-permeable channel OSCA1.3, promoting stomatal closure. Phosphorylates the NADPH oxidase RBOHD at specific sites in a calcium-independent manner to enhance reactive oxygen species (ROS) generation upon flg22 perception. ROS production in response to flg22 controls stomatal movement and restriction of bacterial entry into leaf tissues. Seems not required for flg22-induced MAPK activation. Required for Pep1-induced defenses. Pep1 is an endogenous elicitor that potentiates PAMP-inducible plant responses. In association with PEPR1, acts downstream of the canonical ethylene signaling cascade to regulate ethylene responses. Involved in ethylene signaling. Destabilizes EIN3, the key transcription activator in ethylene signaling, and represses EIN3-dependent transcription. Acts as a negative regulator in brassinosteroid (BR) signaling. Functions in BR signaling by direct interaction with the BR receptor BRI1 cytosolic kinase domain. Required during SCOOP small peptides (e.g. SCOOP10 and SCOOP12) perception and signaling; receptor-like cytosolic kinases (RLCK) activated by BAK1/SERK3 and SERK4 coreceptors when associated with MIK2 upon the perception of SCOOP peptides. In terms of biological role, (Microbial infection) Xanthomonas campestris effector AvrAC/XopAC-mediated uridylylation prevents activation by phosphorylation at the same residues, thus affecting immune responses and reducing defense responses toward X.campestris, mediating avrAC/XopAC virulence functions. This Arabidopsis thaliana (Mouse-ear cress) protein is Serine/threonine-protein kinase BIK1.